The chain runs to 80 residues: Conotoxin Bu14 (80 aa).

Positions 1–8 (AACQLGTA) are cleaved as a signal peptide. Residues 9–40 (ASFARDKQDYPAVRSDGRQDSKDSTLDRIAKR) constitute a propeptide that is removed on maturation. 3 cysteine pairs are disulfide-bonded: cysteine 41–cysteine 55, cysteine 48–cysteine 59, and cysteine 54–cysteine 69.

It belongs to the conotoxin O1 superfamily. As to expression, expressed by the venom duct.

It is found in the secreted. The polypeptide is Conotoxin Bu14 (Conus bullatus (Bubble cone)).